The chain runs to 384 residues: S-adenosylmethionine synthase (384 aa).

ATP is bound at residue H15. Residue D17 participates in Mg(2+) binding. E43 contacts K(+). Residues E56 and Q99 each coordinate L-methionine. Residues 99–109 (QSPDINQGVDR) form a flexible loop region. ATP is bound by residues 164 to 166 (DAK), 230 to 231 (RF), D239, 245 to 246 (RK), A262, and K266. D239 contributes to the L-methionine binding site. K270 serves as a coordination point for L-methionine.

The protein belongs to the AdoMet synthase family. Homotetramer; dimer of dimers. It depends on Mg(2+) as a cofactor. Requires K(+) as cofactor.

The protein resides in the cytoplasm. The enzyme catalyses L-methionine + ATP + H2O = S-adenosyl-L-methionine + phosphate + diphosphate. Its pathway is amino-acid biosynthesis; S-adenosyl-L-methionine biosynthesis; S-adenosyl-L-methionine from L-methionine: step 1/1. Catalyzes the formation of S-adenosylmethionine (AdoMet) from methionine and ATP. The overall synthetic reaction is composed of two sequential steps, AdoMet formation and the subsequent tripolyphosphate hydrolysis which occurs prior to release of AdoMet from the enzyme. This Escherichia fergusonii (strain ATCC 35469 / DSM 13698 / CCUG 18766 / IAM 14443 / JCM 21226 / LMG 7866 / NBRC 102419 / NCTC 12128 / CDC 0568-73) protein is S-adenosylmethionine synthase.